The sequence spans 96 residues: Protein C4 (96 aa).

A lipid anchor (N-myristoyl glycine; by host) is attached at glycine 2. The interval 66–96 (STDDLQGEDSRQPMTLTPRQLTQEVSRRLLM) is disordered. The span at 77 to 89 (QPMTLTPRQLTQE) shows a compositional bias: polar residues.

Belongs to the geminiviridae protein AC4/C4 family.

Its subcellular location is the host cell membrane. In terms of biological role, pathogenicity determinant. May act as a suppressor of RNA-mediated gene silencing, also known as post-transcriptional gene silencing (PTGS), a mechanism of plant viral defense that limits the accumulation of viral RNAs. In Cynanchum acutum (Tomato), this protein is Protein C4.